A 78-amino-acid chain; its full sequence is uncharacterized protein (78 aa).

This is an uncharacterized protein from Archaeoglobus fulgidus (strain ATCC 49558 / DSM 4304 / JCM 9628 / NBRC 100126 / VC-16).